The primary structure comprises 257 residues: Putative B3 domain-containing protein At2g27410 (257 aa).

The interval 5-50 (ARTTKINHFRGTSTTQNPNRGLEPSPSSYVTRRSKEKRPINVEKRS) is disordered. Residues 8 to 35 (TKINHFRGTSTTQNPNRGLEPSPSSYVT) show a composition bias toward polar residues. Residues 115 to 209 (TPDFLTEDET…KLCFALTPKN (95 aa)) constitute a DNA-binding region (TF-B3). The disordered stretch occupies residues 212–257 (RGNSLPGGDGASTSGESGQVPLPIPPARYSSNSGQGCSGESSSSSS). The segment covering 241–257 (SSNSGQGCSGESSSSSS) has biased composition (low complexity).

The protein localises to the nucleus. The polypeptide is Putative B3 domain-containing protein At2g27410 (Arabidopsis thaliana (Mouse-ear cress)).